Consider the following 246-residue polypeptide: Proteasome subunit alpha type-6-A (246 aa).

This sequence belongs to the peptidase T1A family. In terms of assembly, component of the 20S core complex of the 26S proteasome. The 26S proteasome is composed of a core protease (CP), known as the 20S proteasome, capped at one or both ends by the 19S regulatory particle (RP/PA700). The 20S proteasome core is composed of 28 subunits that are arranged in four stacked rings, resulting in a barrel-shaped structure. The two end rings are each formed by seven alpha subunits, and the two central rings are each formed by seven beta subunits. The catalytic chamber with the active sites is on the inside of the barrel. In terms of tissue distribution, ubiquitous low levels, higher expression in siliques and flowers.

It is found in the cytoplasm. Its subcellular location is the nucleus. Functionally, the proteasome is a multicatalytic proteinase complex which is characterized by its ability to cleave peptides with Arg, Phe, Tyr, Leu, and Glu adjacent to the leaving group at neutral or slightly basic pH. The proteasome has an ATP-dependent proteolytic activity. The sequence is that of Proteasome subunit alpha type-6-A (PAA1) from Arabidopsis thaliana (Mouse-ear cress).